A 367-amino-acid polypeptide reads, in one-letter code: Anthranilate phosphoribosyltransferase (367 aa).

A compositionally biased stretch (low complexity) spans 1–17 (MVLSSEASSAADHSAAA). The disordered stretch occupies residues 1–22 (MVLSSEASSAADHSAAAPIPTS). Residues glycine 104, 107–108 (GD), threonine 112, 114–117 (NLST), 132–140 (KHGNRAASS), and glycine 144 contribute to the 5-phospho-alpha-D-ribose 1-diphosphate site. Position 104 (glycine 104) interacts with anthranilate. A Mg(2+)-binding site is contributed by serine 116. Anthranilate is bound at residue asparagine 135. Arginine 190 is an anthranilate binding site. Residues aspartate 248 and glutamate 249 each contribute to the Mg(2+) site.

It belongs to the anthranilate phosphoribosyltransferase family. As to quaternary structure, homodimer. The cofactor is Mg(2+).

It catalyses the reaction N-(5-phospho-beta-D-ribosyl)anthranilate + diphosphate = 5-phospho-alpha-D-ribose 1-diphosphate + anthranilate. The protein operates within amino-acid biosynthesis; L-tryptophan biosynthesis; L-tryptophan from chorismate: step 2/5. In terms of biological role, catalyzes the transfer of the phosphoribosyl group of 5-phosphorylribose-1-pyrophosphate (PRPP) to anthranilate to yield N-(5'-phosphoribosyl)-anthranilate (PRA). This is Anthranilate phosphoribosyltransferase from Mycobacterium ulcerans (strain Agy99).